The sequence spans 456 residues: Gamma-aminobutyric acid receptor subunit alpha-1 (456 aa).

The N-terminal stretch at 1-27 (MRKSPGLSDCLWAWILLLSTLTGRSYG) is a signal peptide. Residues 28–253 (QPSLQDELKD…FHLKRKIGYF (226 aa)) are Extracellular-facing. A glycan (N-linked (GlcNAc...) asparagine) is linked at Asn38. Arg94 provides a ligand contact to 4-aminobutanoate. A glycan (N-linked (GlcNAc...) asparagine) is linked at Asn138. Thr157 is a binding site for 4-aminobutanoate. Cysteines 166 and 180 form a disulfide. The chain crosses the membrane as a helical span at residues 254-274 (VIQTYLPCIMTVILSQVSFWL). At 275-279 (NRESV) the chain is on the cytoplasmic side. Residues 280–301 (PARTVFGVTTVLTMTTLSISAR) traverse the membrane as a helical segment. Residues 302 to 311 (NSLPKVAYAT) are Extracellular-facing. A helical transmembrane segment spans residues 312–333 (AMDWFIAVCYAFVFSALIEFAT). Topologically, residues 334–421 (VNYFTKRGYA…TFNSVSKIDR (88 aa)) are cytoplasmic. The helical transmembrane segment at 422–441 (LSRIAFPLLFGIFNLIYWAT) threads the bilayer. Topologically, residues 442–456 (YLNREPQLKAPTPHQ) are extracellular.

Belongs to the ligand-gated ion channel (TC 1.A.9) family. Gamma-aminobutyric acid receptor (TC 1.A.9.5) subfamily. GABRA1 sub-subfamily. Heteropentamer, formed by a combination of alpha (GABRA1-6), beta (GABRB1-3), gamma (GABRG1-3), delta (GABRD), epsilon (GABRE), rho (GABRR1-3), pi (GABRP) and theta (GABRQ) subunits, each subunit exhibiting distinct physiological and pharmacological properties. Interacts with UBQLN1. Interacts with TRAK1. Interacts with KIF21B. Identified in a complex of 720 kDa composed of LHFPL4, NLGN2, GABRA1, GABRB2, GABRG2 and GABRB3. Interacts with LHFPL4. Interacts with NLGN2. Interacts with SHISA7; interaction leads to the regulation of GABA(A) receptor trafficking, channel deactivation kinetics and pharmacology.

The protein localises to the postsynaptic cell membrane. Its subcellular location is the cell membrane. It is found in the cytoplasmic vesicle membrane. It catalyses the reaction chloride(in) = chloride(out). Its activity is regulated as follows. Allosterically activated by benzodiazepines, the neuroanesthetic alphaxalone and pentobarbital. Inhibited by the antagonist bicuculline. Potentiated by histamine. Alpha subunit of the heteropentameric ligand-gated chloride channel gated by gamma-aminobutyric acid (GABA), a major inhibitory neurotransmitter in the brain. GABA-gated chloride channels, also named GABA(A) receptors (GABAAR), consist of five subunits arranged around a central pore and contain GABA active binding site(s) located at the alpha and beta subunit interface(s). When activated by GABA, GABAARs selectively allow the flow of chloride anions across the cell membrane down their electrochemical gradient. Alpha-1/GABRA1-containing GABAARs are largely synaptic. Chloride influx into the postsynaptic neuron following GABAAR opening decreases the neuron ability to generate a new action potential, thereby reducing nerve transmission. GABAARs containing alpha-1 and beta-2 or -3 subunits exhibit synaptogenic activity; the gamma-2 subunit being necessary but not sufficient to induce rapid synaptic contacts formation. GABAARs function also as histamine receptor where histamine binds at the interface of two neighboring beta subunits and potentiates GABA response. GABAARs containing alpha, beta and epsilon subunits also permit spontaneous chloride channel activity while preserving the structural information required for GABA-gated openings. Alpha-1-mediated plasticity in the orbitofrontal cortex regulates context-dependent action selection. Together with rho subunits, may also control neuronal and glial GABAergic transmission in the cerebellum. The polypeptide is Gamma-aminobutyric acid receptor subunit alpha-1 (GABRA1) (Pongo abelii (Sumatran orangutan)).